A 113-amino-acid polypeptide reads, in one-letter code: Putative membrane protein insertion efficiency factor (113 aa).

The protein belongs to the UPF0161 family.

It is found in the cell inner membrane. In terms of biological role, could be involved in insertion of integral membrane proteins into the membrane. In Campylobacter jejuni subsp. jejuni serotype O:23/36 (strain 81-176), this protein is Putative membrane protein insertion efficiency factor.